Here is a 95-residue protein sequence, read N- to C-terminus: Aspartyl/glutamyl-tRNA(Asn/Gln) amidotransferase subunit C (95 aa).

It belongs to the GatC family. In terms of assembly, heterotrimer of A, B and C subunits.

The catalysed reaction is L-glutamyl-tRNA(Gln) + L-glutamine + ATP + H2O = L-glutaminyl-tRNA(Gln) + L-glutamate + ADP + phosphate + H(+). It carries out the reaction L-aspartyl-tRNA(Asn) + L-glutamine + ATP + H2O = L-asparaginyl-tRNA(Asn) + L-glutamate + ADP + phosphate + 2 H(+). Functionally, allows the formation of correctly charged Asn-tRNA(Asn) or Gln-tRNA(Gln) through the transamidation of misacylated Asp-tRNA(Asn) or Glu-tRNA(Gln) in organisms which lack either or both of asparaginyl-tRNA or glutaminyl-tRNA synthetases. The reaction takes place in the presence of glutamine and ATP through an activated phospho-Asp-tRNA(Asn) or phospho-Glu-tRNA(Gln). The chain is Aspartyl/glutamyl-tRNA(Asn/Gln) amidotransferase subunit C from Pseudomonas fluorescens (strain SBW25).